The sequence spans 65 residues: Large ribosomal subunit protein bL35 (65 aa).

It belongs to the bacterial ribosomal protein bL35 family.

The chain is Large ribosomal subunit protein bL35 from Prochlorococcus marinus (strain MIT 9215).